Reading from the N-terminus, the 351-residue chain is Serine/threonine-protein kinase ZRK1 (351 aa).

One can recognise a Protein kinase domain in the interval 60–347; it reads FDSSCFVSQD…KELKQIEASL (288 aa). Residues 66–74 and K87 each bind ATP; that span reads VSQDVYYKW. D191 serves as the catalytic Proton acceptor.

It belongs to the protein kinase superfamily. Ser/Thr protein kinase family. ZRK subfamily. Component of a stable high-order oligomeric complex made of RKS1 and RPP13L4/ZAR1 which recruits Xanthomonas campestris effector XopAC/AvrAC-mediated uridylylated PBL2 in the presence of ATP to form a wheel-like pentameric resistosome; this complex triggers immunity toward X.campestris in vascular tissues. Interacts with RPP13L4/ZAR1 and uridylylated PBL2. Expressed at high levels in germinating seeds and at lower levels in adult leaves.

It carries out the reaction L-seryl-[protein] + ATP = O-phospho-L-seryl-[protein] + ADP + H(+). It catalyses the reaction L-threonyl-[protein] + ATP = O-phospho-L-threonyl-[protein] + ADP + H(+). Serine/threonine-protein kinase that confers a broad-spectrum quantitative disease resistance (QDR) to the pathogenic biotrophic bacteria Xanthomonas campestris (e.g. pv. campestris (Xcc), pv. raphani, pv. armoriaceae and pv. incanae) by restricting bacterial spread to the vascular system from the infection site; X.campestris causes black rot disease in crops. Seems to not have any kinase activity. The chain is Serine/threonine-protein kinase ZRK1 from Arabidopsis thaliana (Mouse-ear cress).